Here is a 624-residue protein sequence, read N- to C-terminus: LRR receptor kinase BAK1 (624 aa).

Residues 1–25 (MAAHRWAVWAVLLLRLLVPAARVLA) form the signal peptide. Topologically, residues 26 to 237 (NMEGDALHSL…QSPGSSSSTG (212 aa)) are extracellular. LRR repeat units lie at residues 91–115 (LKNL…LGNL), 117–139 (NLVS…LGNL), 140–163 (LKLR…LTAI), and 164–188 (TALQ…SFSL). Residues N103, N114, N127, N149, and N175 are each glycosylated (N-linked (GlcNAc...) asparagine). The interval 205 to 236 (TTKPCPGAPPFSPPPPYNPPTPVQSPGSSSST) is disordered. The span at 210-227 (PGAPPFSPPPPYNPPTPV) shows a compositional bias: pro residues. The helical transmembrane segment at 238–258 (AIAGGVAAGAALLFAIPAIGF) threads the bilayer. Over 259-624 (AWYRRRKPQE…LHAVELSGPR (366 aa)) the chain is Cytoplasmic. In terms of domain architecture, Protein kinase spans 301-588 (FSNKNILGRG…GLAERWEEWQ (288 aa)). ATP-binding positions include 307 to 315 (LGRGGFGKV) and K329. D428 functions as the Proton acceptor in the catalytic mechanism.

This sequence belongs to the protein kinase superfamily. Ser/Thr protein kinase family. As to quaternary structure, forms homodimers. Interacts with BRI1. Interacts with REM4.1. In terms of tissue distribution, expressed in developing lateral roots, shoot apex, leaf blades, lamina joints and flowers. Expressed at low levels in leaf sheaths and panicles.

It is found in the cell membrane. The catalysed reaction is L-seryl-[protein] + ATP = O-phospho-L-seryl-[protein] + ADP + H(+). It catalyses the reaction L-threonyl-[protein] + ATP = O-phospho-L-threonyl-[protein] + ADP + H(+). LRR receptor kinase involved in defense response. Does not seem to be required specifically for XA21-mediated immunity or basal resistance to Xanthomonas oryzae pv. oryzae (Xoo), or immunity to Magnaporthe oryzae. Involved in brassinosteroid (BR) signaling pathway. Acts as a coreceptor of BRI1. Forms at the plasma membrane a receptor complex with BRI1 which is activated in response to brassinolide. Phosphorylates BRI1. Required for normal plant growth and leaf development. Possesses kinase activity in vitro. The protein is LRR receptor kinase BAK1 of Oryza sativa subsp. japonica (Rice).